A 183-amino-acid polypeptide reads, in one-letter code: uncharacterized protein (183 aa).

The segment covering Tyr-105 to Ser-149 has biased composition (low complexity). The tract at residues Tyr-105–Ile-151 is disordered.

This is an uncharacterized protein from Dictyostelium discoideum (Social amoeba).